Consider the following 384-residue polypeptide: Cobalt-precorrin-5B C(1)-methyltransferase (384 aa).

Belongs to the CbiD family.

It carries out the reaction Co-precorrin-5B + S-adenosyl-L-methionine = Co-precorrin-6A + S-adenosyl-L-homocysteine. Its pathway is cofactor biosynthesis; adenosylcobalamin biosynthesis; cob(II)yrinate a,c-diamide from sirohydrochlorin (anaerobic route): step 6/10. Catalyzes the methylation of C-1 in cobalt-precorrin-5B to form cobalt-precorrin-6A. The chain is Cobalt-precorrin-5B C(1)-methyltransferase from Ruminiclostridium cellulolyticum (strain ATCC 35319 / DSM 5812 / JCM 6584 / H10) (Clostridium cellulolyticum).